The sequence spans 256 residues: DNA repair protein RecO (256 aa).

This sequence belongs to the RecO family.

In terms of biological role, involved in DNA repair and RecF pathway recombination. The chain is DNA repair protein RecO from Bacillus pumilus (strain SAFR-032).